A 184-amino-acid polypeptide reads, in one-letter code: ATP synthase subunit delta (184 aa).

This sequence belongs to the ATPase delta chain family. F-type ATPases have 2 components, F(1) - the catalytic core - and F(0) - the membrane proton channel. F(1) has five subunits: alpha(3), beta(3), gamma(1), delta(1), epsilon(1). F(0) has three main subunits: a(1), b(2) and c(10-14). The alpha and beta chains form an alternating ring which encloses part of the gamma chain. F(1) is attached to F(0) by a central stalk formed by the gamma and epsilon chains, while a peripheral stalk is formed by the delta and b chains.

The protein localises to the cell inner membrane. Its function is as follows. F(1)F(0) ATP synthase produces ATP from ADP in the presence of a proton or sodium gradient. F-type ATPases consist of two structural domains, F(1) containing the extramembraneous catalytic core and F(0) containing the membrane proton channel, linked together by a central stalk and a peripheral stalk. During catalysis, ATP synthesis in the catalytic domain of F(1) is coupled via a rotary mechanism of the central stalk subunits to proton translocation. Functionally, this protein is part of the stalk that links CF(0) to CF(1). It either transmits conformational changes from CF(0) to CF(1) or is implicated in proton conduction. In Zymomonas mobilis subsp. mobilis (strain ATCC 31821 / ZM4 / CP4), this protein is ATP synthase subunit delta.